The sequence spans 183 residues: Capsid protein (183 aa).

Residues 136 to 183 are disordered; the sequence is NAPILSTLPETTVVRQRGRAPRRRTPSPRRRRSQSPRRRRSQSPASQC. A compositionally biased stretch (basic residues) spans 151 to 176; the sequence is QRGRAPRRRTPSPRRRRSQSPRRRRS. One copy of the 1; half-length repeat lies at 155–161; that stretch reads APRRRTP. The 3 X 8 AA repeats of S-P-R-R-R-[PR]-S-Q stretch occupies residues 155-177; the sequence is APRRRTPSPRRRRSQSPRRRRSQ. The Bipartite nuclear localization signal motif lies at 158–175; it reads RRTPSPRRRRSQSPRRRR. A phosphoserine; by host mark is found at serine 162 and serine 170. Tandem repeats lie at residues 162 to 169 and 170 to 177. An RNA binding region spans residues 177 to 183; that stretch reads QSPASQC.

This sequence belongs to the orthohepadnavirus core antigen family. As to quaternary structure, homodimerizes, then multimerizes. Interacts with cytosol exposed regions of viral L glycoprotein present in the reticulum-to-Golgi compartment. Interacts with human FLNB. Phosphorylated form interacts with host importin alpha; this interaction depends on the exposure of the NLS, which itself depends upon genome maturation and/or phosphorylation of the capsid protein. Interacts with host NUP153. Phosphorylated by host SRPK1, SRPK2, and maybe protein kinase C or GAPDH. Phosphorylation is critical for pregenomic RNA packaging. Protein kinase C phosphorylation is stimulated by HBx protein and may play a role in transport of the viral genome to the nucleus at the late step during the viral replication cycle.

It localises to the virion. It is found in the host cytoplasm. Functionally, self assembles to form an icosahedral capsid. Most capsids appear to be large particles with an icosahedral symmetry of T=4 and consist of 240 copies of capsid protein, though a fraction forms smaller T=3 particles consisting of 180 capsid proteins. Entering capsids are transported along microtubules to the nucleus. Phosphorylation of the capsid is thought to induce exposure of nuclear localization signal in the C-terminal portion of the capsid protein that allows binding to the nuclear pore complex via the importin (karyopherin-) alpha and beta. Capsids are imported in intact form through the nuclear pore into the nuclear basket, where it probably binds NUP153. Only capsids that contain the mature viral genome can release the viral DNA and capsid protein into the nucleoplasm. Immature capsids get stuck in the basket. Capsids encapsulate the pre-genomic RNA and the P protein. Pre-genomic RNA is reverse-transcribed into DNA while the capsid is still in the cytoplasm. The capsid can then either be directed to the nucleus, providing more genomes for transcription, or bud through the endoplasmic reticulum to provide new virions. The chain is Capsid protein from Homo sapiens (Human).